The chain runs to 294 residues: Ventral anterior homeobox 2b (294 aa).

Basic and acidic residues predominate over residues methionine 1–serine 10. Disordered regions lie at residues methionine 1 to arginine 27, lysine 43 to serine 65, arginine 149 to threonine 168, proline 190 to serine 223, and serine 272 to serine 294. A DNA-binding region (homeobox) is located at residues proline 98–glutamine 157. The span at lysine 154–serine 165 shows a compositional bias: basic and acidic residues. Low complexity predominate over residues serine 197–serine 219. Over residues threonine 279–serine 288 the composition is skewed to basic and acidic residues.

Belongs to the EMX homeobox family.

It is found in the nucleus. In terms of biological role, transcription factor that may function in dorsoventral specification of the forebrain. Regulates the expression of Wnt signaling antagonists. In Xenopus laevis (African clawed frog), this protein is Ventral anterior homeobox 2b (vax2-b).